An 82-amino-acid polypeptide reads, in one-letter code: Small ribosomal subunit protein bS16 (82 aa).

Belongs to the bacterial ribosomal protein bS16 family.

The sequence is that of Small ribosomal subunit protein bS16 from Sodalis glossinidius (strain morsitans).